Consider the following 445-residue polypeptide: 3-phosphoshikimate 1-carboxyvinyltransferase (445 aa).

3-phosphoshikimate-binding residues include Lys21, Ser22, and Arg26. Lys21 is a phosphoenolpyruvate binding site. Phosphoenolpyruvate-binding residues include Gly92 and Arg120. 3-phosphoshikimate contacts are provided by Ser165, Gln166, Asp307, and Lys334. Position 166 (Gln166) interacts with phosphoenolpyruvate. The active-site Proton acceptor is the Asp307. Residues Arg338, Arg379, and Lys405 each contribute to the phosphoenolpyruvate site.

The protein belongs to the EPSP synthase family. Monomer.

The protein resides in the cytoplasm. It carries out the reaction 3-phosphoshikimate + phosphoenolpyruvate = 5-O-(1-carboxyvinyl)-3-phosphoshikimate + phosphate. It participates in metabolic intermediate biosynthesis; chorismate biosynthesis; chorismate from D-erythrose 4-phosphate and phosphoenolpyruvate: step 6/7. In terms of biological role, catalyzes the transfer of the enolpyruvyl moiety of phosphoenolpyruvate (PEP) to the 5-hydroxyl of shikimate-3-phosphate (S3P) to produce enolpyruvyl shikimate-3-phosphate and inorganic phosphate. The sequence is that of 3-phosphoshikimate 1-carboxyvinyltransferase from Chlamydia felis (strain Fe/C-56) (Chlamydophila felis).